A 609-amino-acid chain; its full sequence is UvrABC system protein C (609 aa).

Residues 13-91 form the GIY-YIG domain; that stretch reads HEPGVYRMYD…IKLYQPRYNV (79 aa). The UVR domain maps to 201–236; sequence QQVLDYLIGKMEQASRNLDFEQAARYRDQIQAVRSV.

This sequence belongs to the UvrC family. In terms of assembly, interacts with UvrB in an incision complex.

The protein localises to the cytoplasm. Functionally, the UvrABC repair system catalyzes the recognition and processing of DNA lesions. UvrC both incises the 5' and 3' sides of the lesion. The N-terminal half is responsible for the 3' incision and the C-terminal half is responsible for the 5' incision. The protein is UvrABC system protein C of Haemophilus influenzae (strain ATCC 51907 / DSM 11121 / KW20 / Rd).